A 155-amino-acid chain; its full sequence is Protein U1 (155 aa).

Belongs to the nanovirus U1 protein family.

The polypeptide is Protein U1 (DNA-U1) (Cicer arietinum (Chickpea)).